The primary structure comprises 523 residues: ATP-dependent RNA helicase dbp8 (523 aa).

Positions 1–52 are disordered; the sequence is MAPPRPEETISEDLDESSGSSETEQPDIQTRAPKRRRLSASSDDSYVAPAPL. A Q motif motif is present at residues 93 to 121; sequence SSFSALNVAPWLVGSLTTLAVRKPTAIQK. The region spanning 124-303 is the Helicase ATP-binding domain; that stretch reads IPEILNGKDC…NMPRAANKPP (180 aa). 137 to 144 is a binding site for ATP; sequence SRTGSGKT. The DEAD box signature appears at 246–249; it reads DEAD. A Helicase C-terminal domain is found at 335-492; sequence AFLHVLLSTE…GRVVRTGVLK (158 aa).

This sequence belongs to the DEAD box helicase family. DDX49/DBP8 subfamily.

The protein localises to the nucleus. It localises to the nucleolus. The enzyme catalyses ATP + H2O = ADP + phosphate + H(+). In terms of biological role, ATP-binding RNA helicase involved in 40S ribosomal subunit biogenesis and is required for the normal formation of 18S rRNAs through pre-rRNA processing at A0, A1 and A2 sites. Required for vegetative growth. In Aspergillus clavatus (strain ATCC 1007 / CBS 513.65 / DSM 816 / NCTC 3887 / NRRL 1 / QM 1276 / 107), this protein is ATP-dependent RNA helicase dbp8 (dbp8).